Reading from the N-terminus, the 501-residue chain is Tegument protein US24 (501 aa).

Belongs to the herpesviridae US22 family.

The protein resides in the virion tegument. The sequence is that of Tegument protein US24 (US24) from Human cytomegalovirus (strain Merlin) (HHV-5).